The primary structure comprises 221 residues: Ribosomal RNA small subunit methyltransferase G (221 aa).

S-adenosyl-L-methionine-binding residues include glycine 78, phenylalanine 83, and arginine 150.

It belongs to the methyltransferase superfamily. RNA methyltransferase RsmG family.

Its subcellular location is the cytoplasm. Its function is as follows. Specifically methylates the N7 position of a guanine in 16S rRNA. This is Ribosomal RNA small subunit methyltransferase G from Bifidobacterium longum (strain DJO10A).